A 425-amino-acid chain; its full sequence is Serine hydroxymethyltransferase (425 aa).

Residues Leu-123 and 127 to 129 each bind (6S)-5,6,7,8-tetrahydrofolate; that span reads GHL. An N6-(pyridoxal phosphate)lysine modification is found at Lys-232. Glu-248 is a (6S)-5,6,7,8-tetrahydrofolate binding site.

This sequence belongs to the SHMT family. Homodimer. Pyridoxal 5'-phosphate is required as a cofactor.

Its subcellular location is the cytoplasm. The enzyme catalyses (6R)-5,10-methylene-5,6,7,8-tetrahydrofolate + glycine + H2O = (6S)-5,6,7,8-tetrahydrofolate + L-serine. It functions in the pathway one-carbon metabolism; tetrahydrofolate interconversion. It participates in amino-acid biosynthesis; glycine biosynthesis; glycine from L-serine: step 1/1. In terms of biological role, catalyzes the reversible interconversion of serine and glycine with tetrahydrofolate (THF) serving as the one-carbon carrier. This reaction serves as the major source of one-carbon groups required for the biosynthesis of purines, thymidylate, methionine, and other important biomolecules. Also exhibits THF-independent aldolase activity toward beta-hydroxyamino acids, producing glycine and aldehydes, via a retro-aldol mechanism. The chain is Serine hydroxymethyltransferase from Anaplasma phagocytophilum (strain HZ).